The sequence spans 266 residues: Proteasome subunit alpha type-1 (266 aa).

Belongs to the peptidase T1A family. In terms of assembly, the 26S proteasome consists of a 20S proteasome core and two 19S regulatory subunits. The 20S proteasome core is composed of 28 subunits that are arranged in four stacked rings, resulting in a barrel-shaped structure. The two end rings are each formed by seven alpha subunits, and the two central rings are each formed by seven beta subunits. The catalytic chamber with the active sites is on the inside of the barrel.

Its subcellular location is the cytoplasm. The protein localises to the nucleus. The proteasome is a multicatalytic proteinase complex which is characterized by its ability to cleave peptides with Arg, Phe, Tyr, Leu, and Glu adjacent to the leaving group at neutral or slightly basic pH. The proteasome has an ATP-dependent proteolytic activity. The sequence is that of Proteasome subunit alpha type-1 from Trypanosoma brucei brucei.